A 359-amino-acid chain; its full sequence is tRNA-specific 2-thiouridylase MnmA (359 aa).

ATP-binding positions include 11-18 and Ile-37; that span reads GISGGVDS. Catalysis depends on Cys-99, which acts as the Nucleophile. Residues Cys-99 and Cys-195 are joined by a disulfide bond. Residue Gly-123 coordinates ATP. The interaction with tRNA stretch occupies residues 145–147; sequence KDQ. Cys-195 serves as the catalytic Cysteine persulfide intermediate. Residues 304 to 305 are interaction with tRNA; that stretch reads RY.

This sequence belongs to the MnmA/TRMU family.

The protein localises to the cytoplasm. The catalysed reaction is S-sulfanyl-L-cysteinyl-[protein] + uridine(34) in tRNA + AH2 + ATP = 2-thiouridine(34) in tRNA + L-cysteinyl-[protein] + A + AMP + diphosphate + H(+). Its function is as follows. Catalyzes the 2-thiolation of uridine at the wobble position (U34) of tRNA, leading to the formation of s(2)U34. The chain is tRNA-specific 2-thiouridylase MnmA from Chlorobium phaeobacteroides (strain BS1).